We begin with the raw amino-acid sequence, 63 residues long: Large ribosomal subunit protein uL30 (63 aa).

It belongs to the universal ribosomal protein uL30 family. As to quaternary structure, part of the 50S ribosomal subunit.

In Rickettsia felis (strain ATCC VR-1525 / URRWXCal2) (Rickettsia azadi), this protein is Large ribosomal subunit protein uL30.